A 289-amino-acid chain; its full sequence is Bifunctional protein FolD (289 aa).

NADP(+) contacts are provided by residues 166–168 (GVS) and Ile-232.

This sequence belongs to the tetrahydrofolate dehydrogenase/cyclohydrolase family. In terms of assembly, homodimer.

The catalysed reaction is (6R)-5,10-methylene-5,6,7,8-tetrahydrofolate + NADP(+) = (6R)-5,10-methenyltetrahydrofolate + NADPH. The enzyme catalyses (6R)-5,10-methenyltetrahydrofolate + H2O = (6R)-10-formyltetrahydrofolate + H(+). The protein operates within one-carbon metabolism; tetrahydrofolate interconversion. Functionally, catalyzes the oxidation of 5,10-methylenetetrahydrofolate to 5,10-methenyltetrahydrofolate and then the hydrolysis of 5,10-methenyltetrahydrofolate to 10-formyltetrahydrofolate. This chain is Bifunctional protein FolD, found in Methylobacillus flagellatus (strain ATCC 51484 / DSM 6875 / VKM B-1610 / KT).